A 320-amino-acid polypeptide reads, in one-letter code: Peptidase 1 (320 aa).

The first 18 residues, 1–18 (MKIVLAIASLLALSAVYA), serve as a signal peptide directing secretion. Positions 19–98 (RPSSIKTFEE…LKTQFDLNAE (80 aa)) are cleaved as a propeptide — activation peptide. 3 disulfide bridges follow: cysteine 102–cysteine 215, cysteine 129–cysteine 169, and cysteine 163–cysteine 201. Cysteine 132 is an active-site residue. Residue asparagine 150 is glycosylated (N-linked (GlcNAc...) asparagine). Residues histidine 268 and asparagine 288 contribute to the active site.

This sequence belongs to the peptidase C1 family. In terms of processing, N-glycosylated. N-glycanase treatment does not completely remove carbohydrates, suggesting that the protein contains additional glycosylation sites.

The protein localises to the secreted. The enzyme catalyses Broad endopeptidase specificity.. Functionally, thiol protease, with a preference for substrates with a large hydrophobic side chain in the P2 position, or with basic residues. The sequence is that of Peptidase 1 (DERP1) from Dermatophagoides pteronyssinus (European house dust mite).